Here is a 327-residue protein sequence, read N- to C-terminus: Acetyl-coenzyme A carboxylase carboxyl transferase subunit alpha (327 aa).

Positions 46-299 (LEARAIQLRR…RQVLLRHLKD (254 aa)) constitute a CoA carboxyltransferase C-terminal domain.

This sequence belongs to the AccA family. As to quaternary structure, acetyl-CoA carboxylase is a heterohexamer composed of biotin carboxyl carrier protein (AccB), biotin carboxylase (AccC) and two subunits each of ACCase subunit alpha (AccA) and ACCase subunit beta (AccD).

The protein localises to the cytoplasm. It catalyses the reaction N(6)-carboxybiotinyl-L-lysyl-[protein] + acetyl-CoA = N(6)-biotinyl-L-lysyl-[protein] + malonyl-CoA. The protein operates within lipid metabolism; malonyl-CoA biosynthesis; malonyl-CoA from acetyl-CoA: step 1/1. Component of the acetyl coenzyme A carboxylase (ACC) complex. First, biotin carboxylase catalyzes the carboxylation of biotin on its carrier protein (BCCP) and then the CO(2) group is transferred by the carboxyltransferase to acetyl-CoA to form malonyl-CoA. This Synechococcus elongatus (strain ATCC 33912 / PCC 7942 / FACHB-805) (Anacystis nidulans R2) protein is Acetyl-coenzyme A carboxylase carboxyl transferase subunit alpha.